Reading from the N-terminus, the 481-residue chain is Aspartyl/glutamyl-tRNA(Asn/Gln) amidotransferase subunit B (481 aa).

It belongs to the GatB/GatE family. GatB subfamily. In terms of assembly, heterotrimer of A, B and C subunits.

The enzyme catalyses L-glutamyl-tRNA(Gln) + L-glutamine + ATP + H2O = L-glutaminyl-tRNA(Gln) + L-glutamate + ADP + phosphate + H(+). It catalyses the reaction L-aspartyl-tRNA(Asn) + L-glutamine + ATP + H2O = L-asparaginyl-tRNA(Asn) + L-glutamate + ADP + phosphate + 2 H(+). Its function is as follows. Allows the formation of correctly charged Asn-tRNA(Asn) or Gln-tRNA(Gln) through the transamidation of misacylated Asp-tRNA(Asn) or Glu-tRNA(Gln) in organisms which lack either or both of asparaginyl-tRNA or glutaminyl-tRNA synthetases. The reaction takes place in the presence of glutamine and ATP through an activated phospho-Asp-tRNA(Asn) or phospho-Glu-tRNA(Gln). The sequence is that of Aspartyl/glutamyl-tRNA(Asn/Gln) amidotransferase subunit B from Pseudomonas paraeruginosa (strain DSM 24068 / PA7) (Pseudomonas aeruginosa (strain PA7)).